A 176-amino-acid chain; its full sequence is Peptide deformylase (176 aa).

Positions 94 and 136 each coordinate Fe cation. E137 is an active-site residue. A Fe cation-binding site is contributed by H140.

Belongs to the polypeptide deformylase family. Fe(2+) is required as a cofactor.

The catalysed reaction is N-terminal N-formyl-L-methionyl-[peptide] + H2O = N-terminal L-methionyl-[peptide] + formate. Its function is as follows. Removes the formyl group from the N-terminal Met of newly synthesized proteins. Requires at least a dipeptide for an efficient rate of reaction. N-terminal L-methionine is a prerequisite for activity but the enzyme has broad specificity at other positions. In Bartonella quintana (strain Toulouse) (Rochalimaea quintana), this protein is Peptide deformylase.